The sequence spans 43 residues: Large ribosomal subunit protein uL11 (43 aa).

This sequence belongs to the universal ribosomal protein uL11 family. As to quaternary structure, part of the ribosomal stalk of the 50S ribosomal subunit. Interacts with L10 and the large rRNA to form the base of the stalk. L10 forms an elongated spine to which L12 dimers bind in a sequential fashion forming a multimeric L10(L12)X complex. Post-translationally, one or more lysine residues are methylated.

Its function is as follows. Forms part of the ribosomal stalk which helps the ribosome interact with GTP-bound translation factors. The sequence is that of Large ribosomal subunit protein uL11 (rplK) from Streptomyces galbus.